Here is a 184-residue protein sequence, read N- to C-terminus: Shikimate kinase (184 aa).

17-22 serves as a coordination point for ATP; it reads SVGKTS. A Mg(2+)-binding site is contributed by Thr21. Positions 39 and 85 each coordinate substrate.

It belongs to the shikimate kinase family. Monomer. Requires Mg(2+) as cofactor.

Its subcellular location is the cytoplasm. The enzyme catalyses shikimate + ATP = 3-phosphoshikimate + ADP + H(+). It participates in metabolic intermediate biosynthesis; chorismate biosynthesis; chorismate from D-erythrose 4-phosphate and phosphoenolpyruvate: step 5/7. Its function is as follows. Catalyzes the specific phosphorylation of the 3-hydroxyl group of shikimic acid using ATP as a cosubstrate. This is Shikimate kinase from Chlamydia muridarum (strain MoPn / Nigg).